Here is a 106-residue protein sequence, read N- to C-terminus: uORF protein (106 aa).

Over residues 1 to 19 (MDLETRVSGHEKPQRRNPE) the composition is skewed to basic and acidic residues. The segment at 1-31 (MDLETRVSGHEKPQRRNPEDPDCQYAKTRSS) is disordered.

Its subcellular location is the host cytoplasm. It localises to the host cytoskeleton. Plays a role in viral replication. The protein is uORF protein of Zika virus (ZIKV).